Reading from the N-terminus, the 288-residue chain is Bifunctional protein FolD (288 aa).

NADP(+) is bound by residues 166–168 and I232; that span reads GAS.

Belongs to the tetrahydrofolate dehydrogenase/cyclohydrolase family. As to quaternary structure, homodimer.

The catalysed reaction is (6R)-5,10-methylene-5,6,7,8-tetrahydrofolate + NADP(+) = (6R)-5,10-methenyltetrahydrofolate + NADPH. It catalyses the reaction (6R)-5,10-methenyltetrahydrofolate + H2O = (6R)-10-formyltetrahydrofolate + H(+). Its pathway is one-carbon metabolism; tetrahydrofolate interconversion. Functionally, catalyzes the oxidation of 5,10-methylenetetrahydrofolate to 5,10-methenyltetrahydrofolate and then the hydrolysis of 5,10-methenyltetrahydrofolate to 10-formyltetrahydrofolate. The polypeptide is Bifunctional protein FolD (Shigella dysenteriae serotype 1 (strain Sd197)).